The chain runs to 317 residues: MSSNKVTAAIIDYLKQAITTGSISEEEKESLEVAAQCIQDSFKIKPEEIKPKSGDRLVAAFEEYEKLHPVEEDSTAHVNKEEAEKLKLEGNNAIAAKDYQKALDLYTKAIEIDPTSPVYYSNRAAAYNQLGQFENAVEDALTCLSLDPHHARAFGRLGRAKLSLGDAAAAADAYKKGLDFDPNNEVLKRGLEAANKQLNQPSDSSATSGADQARTSAGAAPDLGSIFGGGMPDLGSLMNNPAVMNMARNLMQSGALNNIMNDPNIANMARNFQSGGGMPDLSSLANNPQLQNLARNFMNNNNNGNTDNNNQGNPPPQ.

4 TPR repeats span residues 14-48 (LKQA…KPEE), 83-116 (AEKL…DPTS), 118-150 (VYYS…DPHH), and 151-184 (ARAF…DPNN). Residues 198–215 (LNQPSDSSATSGADQART) show a composition bias toward polar residues. Disordered stretches follow at residues 198 to 224 (LNQP…PDLG) and 298 to 317 (MNNN…PPPQ).

Belongs to the SGT family.

The protein localises to the cytoplasm. Its subcellular location is the nucleus. Its function is as follows. Co-chaperone that binds to the molecular chaperone Hsp70 and regulates Hsp70 ATPase activity. The polypeptide is Small glutamine-rich tetratricopeptide repeat-containing protein 2 (sgt2) (Schizosaccharomyces pombe (strain 972 / ATCC 24843) (Fission yeast)).